The sequence spans 232 residues: Large ribosomal subunit protein uL1 (232 aa).

It belongs to the universal ribosomal protein uL1 family. Part of the 50S ribosomal subunit.

Binds directly to 23S rRNA. The L1 stalk is quite mobile in the ribosome, and is involved in E site tRNA release. Functionally, protein L1 is also a translational repressor protein, it controls the translation of the L11 operon by binding to its mRNA. This is Large ribosomal subunit protein uL1 from Bartonella henselae (strain ATCC 49882 / DSM 28221 / CCUG 30454 / Houston 1) (Rochalimaea henselae).